The following is a 158-amino-acid chain: 6,7-dimethyl-8-ribityllumazine synthase (158 aa).

5-amino-6-(D-ribitylamino)uracil contacts are provided by residues Phe-22, 56 to 58, and 80 to 82; these read ALE and VVI. Position 85–86 (85–86) interacts with (2S)-2-hydroxy-3-oxobutyl phosphate; the sequence is ET. The Proton donor role is filled by His-88. Asn-113 is a binding site for 5-amino-6-(D-ribitylamino)uracil. Arg-127 provides a ligand contact to (2S)-2-hydroxy-3-oxobutyl phosphate.

It belongs to the DMRL synthase family.

The enzyme catalyses (2S)-2-hydroxy-3-oxobutyl phosphate + 5-amino-6-(D-ribitylamino)uracil = 6,7-dimethyl-8-(1-D-ribityl)lumazine + phosphate + 2 H2O + H(+). It participates in cofactor biosynthesis; riboflavin biosynthesis; riboflavin from 2-hydroxy-3-oxobutyl phosphate and 5-amino-6-(D-ribitylamino)uracil: step 1/2. Its function is as follows. Catalyzes the formation of 6,7-dimethyl-8-ribityllumazine by condensation of 5-amino-6-(D-ribitylamino)uracil with 3,4-dihydroxy-2-butanone 4-phosphate. This is the penultimate step in the biosynthesis of riboflavin. This chain is 6,7-dimethyl-8-ribityllumazine synthase, found in Neisseria gonorrhoeae (strain ATCC 700825 / FA 1090).